The primary structure comprises 931 residues: Protein phosphatase 1 regulatory subunit 37 homolog (931 aa).

Positions 20-71 (TAASSPASPIPPTSPSMFATPPHQQSHSSATSVRKKVCQEANSSADDPDSDA) are disordered. A compositionally biased stretch (polar residues) spans 41-51 (PHQQSHSSATS). LRR repeat units follow at residues 232–259 (AISL…LARA), 262–285 (SASL…VLIC), 290–314 (NTGI…IYQL), 323–346 (LLDL…LRNR), 351–374 (KSAL…SLAE), 379–407 (NTKI…LVSN), 409–430 (HLHR…ILAE), and 435–458 (NTAL…ALHS). The span at 519-533 (QDHVSEDTEKENKDA) shows a compositional bias: basic and acidic residues. Disordered regions lie at residues 519-602 (QDHV…RHQR) and 780-807 (PDCT…IRQR). A compositionally biased stretch (acidic residues) spans 534 to 547 (DNDDKEPENEDGDT). Positions 554 to 563 (SDASADQSDS) are enriched in low complexity. 2 stretches are compositionally biased toward basic and acidic residues: residues 564 to 584 (PADK…EKRP) and 790 to 807 (TTSR…IRQR).

Belongs to the PPP1R37 family.

The polypeptide is Protein phosphatase 1 regulatory subunit 37 homolog (Caenorhabditis briggsae).